Consider the following 345-residue polypeptide: Probable dual-specificity RNA methyltransferase RlmN (345 aa).

Catalysis depends on Glu-93, which acts as the Proton acceptor. Residues 99 to 326 (DDERATLCIS…TTIRASRGED (228 aa)) form the Radical SAM core domain. Cys-106 and Cys-331 form a disulfide bridge. The [4Fe-4S] cluster site is built by Cys-113, Cys-117, and Cys-120. S-adenosyl-L-methionine is bound by residues 158 to 159 (GE), Ser-190, 212 to 214 (SLH), and His-288. Residue Cys-331 is the S-methylcysteine intermediate of the active site.

This sequence belongs to the radical SAM superfamily. RlmN family. The cofactor is [4Fe-4S] cluster.

The protein resides in the cytoplasm. The catalysed reaction is adenosine(2503) in 23S rRNA + 2 reduced [2Fe-2S]-[ferredoxin] + 2 S-adenosyl-L-methionine = 2-methyladenosine(2503) in 23S rRNA + 5'-deoxyadenosine + L-methionine + 2 oxidized [2Fe-2S]-[ferredoxin] + S-adenosyl-L-homocysteine. It catalyses the reaction adenosine(37) in tRNA + 2 reduced [2Fe-2S]-[ferredoxin] + 2 S-adenosyl-L-methionine = 2-methyladenosine(37) in tRNA + 5'-deoxyadenosine + L-methionine + 2 oxidized [2Fe-2S]-[ferredoxin] + S-adenosyl-L-homocysteine. In terms of biological role, specifically methylates position 2 of adenine 2503 in 23S rRNA and position 2 of adenine 37 in tRNAs. In Bacteroides thetaiotaomicron (strain ATCC 29148 / DSM 2079 / JCM 5827 / CCUG 10774 / NCTC 10582 / VPI-5482 / E50), this protein is Probable dual-specificity RNA methyltransferase RlmN.